The primary structure comprises 113 residues: Hydrogenase maturation factor HypA 1 (113 aa).

Position 2 (His-2) interacts with Ni(2+). Positions 73, 76, 89, and 92 each coordinate Zn(2+).

Belongs to the HypA/HybF family.

Involved in the maturation of [NiFe] hydrogenases. Required for nickel insertion into the metal center of the hydrogenase. The chain is Hydrogenase maturation factor HypA 1 from Bradyrhizobium diazoefficiens (strain JCM 10833 / BCRC 13528 / IAM 13628 / NBRC 14792 / USDA 110).